A 210-amino-acid chain; its full sequence is Cell division protein SepF (210 aa).

This sequence belongs to the SepF family. Homodimer. Interacts with FtsZ.

It is found in the cytoplasm. Its function is as follows. Cell division protein that is part of the divisome complex and is recruited early to the Z-ring. Probably stimulates Z-ring formation, perhaps through the cross-linking of FtsZ protofilaments. Its function overlaps with FtsA. The sequence is that of Cell division protein SepF from Mycobacterium leprae (strain Br4923).